A 259-amino-acid polypeptide reads, in one-letter code: Small ribosomal subunit protein eS1 (259 aa).

Basic residues predominate over residues 1–18 (MAVGKNKRISKGKKGGKK). The tract at residues 1–22 (MAVGKNKRISKGKKGGKKKASD) is disordered.

This sequence belongs to the eukaryotic ribosomal protein eS1 family. As to quaternary structure, component of the small ribosomal subunit. Mature ribosomes consist of a small (40S) and a large (60S) subunit. The 40S subunit contains about 33 different proteins and 1 molecule of RNA (18S). The 60S subunit contains about 49 different proteins and 3 molecules of RNA (25S, 5.8S and 5S).

It localises to the cytoplasm. In Chlamydomonas reinhardtii (Chlamydomonas smithii), this protein is Small ribosomal subunit protein eS1.